The sequence spans 1278 residues: ABC transporter B family member 11 (1278 aa).

Basic and acidic residues-rich tracts occupy residues M1–S13 and S21–E35. Positions M1–E35 are disordered. 6 consecutive transmembrane segments (helical) span residues V55–M75, F106–I126, F182–L202, L205–V225, G285–F305, and G314–L334. Residues M58 to A346 form the ABC transmembrane type-1 1 domain. Residues I381–R617 enclose the ABC transporter 1 domain. G416–S423 contributes to the ATP binding site. Residues N483, N568, and N653 are each glycosylated (N-linked (GlcNAc...) asparagine). Positions E629 to S654 are enriched in polar residues. Residues E629–R656 form a disordered region. In terms of domain architecture, ABC transmembrane type-1 2 spans L710–K997. 2 consecutive transmembrane segments (helical) span residues L711–I731 and F751–M771. Residue N806 is glycosylated (N-linked (GlcNAc...) asparagine). Transmembrane regions (helical) follow at residues A824 to L844, I845 to I865, G932 to T952, and V971 to F991. Residues I1032 to Q1271 enclose the ABC transporter 2 domain. G1067–S1074 serves as a coordination point for ATP. 2 N-linked (GlcNAc...) asparagine glycosylation sites follow: N1121 and N1222.

Belongs to the ABC transporter superfamily. ABCB family. Multidrug resistance exporter (TC 3.A.1.201) subfamily. Present in roots and flower buds.

It localises to the membrane. It carries out the reaction (indol-3-yl)acetate(in) + ATP + H2O = (indol-3-yl)acetate(out) + ADP + phosphate + H(+). In terms of biological role, involved in the regulation of auxin transport required for pistil elongation. This is ABC transporter B family member 11 from Arabidopsis thaliana (Mouse-ear cress).